The chain runs to 678 residues: Vacuolar fusion protein mon1 (678 aa).

Disordered stretches follow at residues 1-116, 449-474, and 568-591; these read MDRD…YTSP, EENN…VTSP, and FETS…KTTE. Over residues 10 to 20 the composition is skewed to low complexity; that stretch reads NDGTNDNNDTT. Polar residues predominate over residues 63–77; sequence RPTTQVSTIDISTLS. A compositionally biased stretch (low complexity) spans 87-105; sequence STSATSATSATSATRSVAS. Positions 106–116 are enriched in polar residues; the sequence is PQSSASGYTSP. Over residues 450 to 459 the composition is skewed to low complexity; the sequence is ENNSNNTNNP. Residues 460-471 are compositionally biased toward pro residues; sequence EQPPQPPPPKPV.

Belongs to the MON1/SAND family.

It localises to the endosome. The protein resides in the multivesicular body membrane. The protein localises to the prevacuolar compartment membrane. Its subcellular location is the vacuole membrane. In terms of biological role, in complex with CCZ1, is required for multiple vacuole delivery pathways including the cytoplasm to vacuole transport (Cvt), autophagy, pexophagy and endocytosis. The MON1-CCZ1 complex acts at the fusion of vesicles with the vacuole, through its regulation of the SNARE complex during the coordinated priming and docking stages of fusion, and particularly at the stage of tethering/docking. This Neurospora crassa (strain ATCC 24698 / 74-OR23-1A / CBS 708.71 / DSM 1257 / FGSC 987) protein is Vacuolar fusion protein mon1 (apg-13).